The sequence spans 237 residues: KH homology domain-containing protein 1 (237 aa).

2 helical membrane-spanning segments follow: residues Arg7–Gly29 and Leu33–Ile50. The 60-residue stretch at Pro96–Leu155 folds into the KH; atypical domain.

The protein belongs to the KHDC1 family.

It localises to the membrane. This chain is KH homology domain-containing protein 1, found in Homo sapiens (Human).